A 365-amino-acid polypeptide reads, in one-letter code: Chorismate synthase (365 aa).

Position 46 (arginine 46) interacts with NADP(+). FMN is bound by residues 123–125, 241–242, glycine 281, 296–300, and arginine 322; these read RSS, NG, and KPTPS.

This sequence belongs to the chorismate synthase family. As to quaternary structure, homotetramer. It depends on FMNH2 as a cofactor.

It catalyses the reaction 5-O-(1-carboxyvinyl)-3-phosphoshikimate = chorismate + phosphate. It participates in metabolic intermediate biosynthesis; chorismate biosynthesis; chorismate from D-erythrose 4-phosphate and phosphoenolpyruvate: step 7/7. Functionally, catalyzes the anti-1,4-elimination of the C-3 phosphate and the C-6 proR hydrogen from 5-enolpyruvylshikimate-3-phosphate (EPSP) to yield chorismate, which is the branch point compound that serves as the starting substrate for the three terminal pathways of aromatic amino acid biosynthesis. This reaction introduces a second double bond into the aromatic ring system. This Helicobacter pylori (strain Shi470) protein is Chorismate synthase.